The chain runs to 299 residues: 4-diphosphocytidyl-2-C-methyl-D-erythritol kinase (299 aa).

The active site involves Lys33. 115 to 125 (PLASGLGGGSS) is an ATP binding site. The active site involves Asp154.

This sequence belongs to the GHMP kinase family. IspE subfamily.

It carries out the reaction 4-CDP-2-C-methyl-D-erythritol + ATP = 4-CDP-2-C-methyl-D-erythritol 2-phosphate + ADP + H(+). Its pathway is isoprenoid biosynthesis; isopentenyl diphosphate biosynthesis via DXP pathway; isopentenyl diphosphate from 1-deoxy-D-xylulose 5-phosphate: step 3/6. Functionally, catalyzes the phosphorylation of the position 2 hydroxy group of 4-diphosphocytidyl-2C-methyl-D-erythritol. The polypeptide is 4-diphosphocytidyl-2-C-methyl-D-erythritol kinase (Deinococcus geothermalis (strain DSM 11300 / CIP 105573 / AG-3a)).